The chain runs to 475 residues: Proton-coupled amino acid transporter 1 (475 aa).

A compositionally biased stretch (basic and acidic residues) spans 1–15 (MSTQRLRNEDYHDYS). The tract at residues 1 to 32 (MSTQRLRNEDYHDYSSTDVSPEESPSEGLGSF) is disordered. The Cytoplasmic segment spans residues 1-50 (MSTQRLRNEDYHDYSSTDVSPEESPSEGLGSFSPGSYQRLGENSSMTWFQ). The helical transmembrane segment at 51–71 (TLIHLLKGNIGTGLLGLPLAV) threads the bilayer. Topologically, residues 72–77 (KNAGLL) are extracellular. The chain crosses the membrane as a helical span at residues 78 to 98 (LGPLSLLVIGIVAVHCMGILV). Over 99–140 (KCAHHLCRRLNKPFLDYGDTVMYGLECSPSTWIRNHSHWGRR) the chain is Cytoplasmic. A helical transmembrane segment spans residues 141–161 (IVDFFLVVTQLGFCCVYFVFL). At 162 to 189 (ADNFKQVIEAANGTTTNCNNNETVILTP) the chain is on the extracellular side. Asn173 and Asn182 each carry an N-linked (GlcNAc...) asparagine glycan. Cys179 and Cys328 are oxidised to a cystine. A helical transmembrane segment spans residues 190–210 (TMDSRLYMLTFLPFLVLLSFI). At 211-214 (RNLR) the chain is on the cytoplasmic side. Residues 215-235 (ILSIFSLLANISMFVSLIMIY) traverse the membrane as a helical segment. At 236–256 (QFIVQRIPDPSHLPLVAPWKT) the chain is on the extracellular side. Residues 257–277 (YPLFFGTAIFAFEGIGVVLPL) traverse the membrane as a helical segment. Residues 278-288 (ENKMKDSQKFP) are Cytoplasmic-facing. The helical transmembrane segment at 289–309 (LILYLGMAIITVLYISLGSLG) threads the bilayer. Residues 310–341 (YLQFGADIKGSITLNLPNCWLYQSVKLLYSIG) are Extracellular-facing. Residues 342–362 (IFFTYALQFYVAAEIIIPAIV) traverse the membrane as a helical segment. At 363 to 371 (SRVPERFEL) the chain is on the cytoplasmic side. Residues 372-392 (VVDLSARTAMVCVTCVLAVLI) form a helical membrane-spanning segment. The Extracellular segment spans residues 393–396 (PRLD). The helical transmembrane segment at 397–417 (LVISLVGSVSSSALALIIPPL) threads the bilayer. Residues 418–438 (LEVTTYYGEGISPLTITKDAL) are Cytoplasmic-facing. The helical transmembrane segment at 439 to 459 (ISILGFVGFVVGTYESLWELI) threads the bilayer. Residues 460–475 (QPSHSDSSTNSTSAFI) lie on the Extracellular side of the membrane. An N-linked (GlcNAc...) asparagine glycan is attached at Asn469.

This sequence belongs to the amino acid/polyamine transporter 2 family. As to expression, widely expressed and predominantly expressed in brain. Within the brain, expression restricted to neurons and not detected in glial cells. Abundant in regions rich in neurons using glutamate and GABA such as Purkinje cells in the cerebellum and pyramidal cells in the hippocampus.

The protein resides in the cell membrane. Its subcellular location is the apical cell membrane. It is found in the lysosome membrane. The enzyme catalyses glycine(in) + H(+)(in) = glycine(out) + H(+)(out). The catalysed reaction is L-proline(out) + H(+)(out) = L-proline(in) + H(+)(in). It carries out the reaction D-proline(out) + H(+)(out) = D-proline(in) + H(+)(in). It catalyses the reaction L-alanine(in) + H(+)(in) = L-alanine(out) + H(+)(out). The enzyme catalyses D-alanine(in) + H(+)(in) = D-alanine(out) + H(+)(out). The catalysed reaction is L-serine(in) + H(+)(in) = L-serine(out) + H(+)(out). It carries out the reaction D-serine(out) + H(+)(out) = D-serine(in) + H(+)(in). It catalyses the reaction 4-aminobutanoate(in) + H(+)(in) = 4-aminobutanoate(out) + H(+)(out). The enzyme catalyses beta-alanine(in) + H(+)(in) = beta-alanine(out) + H(+)(out). Electrogenic proton/amino acid symporter with selectivity for small apolar L-amino acids, their D-enantiomers and selected amino acid derivatives such as 4-aminobutanoate/GABA. May be involved in the efflux from the lysosomal compartment of neutral amino acids resulting from proteolysis. May play a role in specifying sites for exocytosis in neurons. The chain is Proton-coupled amino acid transporter 1 from Rattus norvegicus (Rat).